Consider the following 1347-residue polypeptide: Protocadherin-11 X-linked (1347 aa).

A signal peptide spans 1–23 (MDLLSGTYIFAVLLACVVFHSGA). Topologically, residues 24–812 (QEKNYTIREE…VSSPTNDYVK (789 aa)) are extracellular. Cadherin domains are found at residues 26-139 (KNYT…APLF), 140-249 (PATV…HPVF), 250-355 (KETE…VPSI), 362-466 (NPVN…APVF), 467-570 (TQSF…SPVF), 571-673 (THNE…KPVF), and 677-795 (PSNY…APVT). N27, N48, and N54 each carry an N-linked (GlcNAc...) asparagine glycan. N-linked (GlcNAc...) asparagine glycosylation is present at N344. A glycan (N-linked (GlcNAc...) asparagine) is linked at N553. An N-linked (GlcNAc...) asparagine glycan is attached at N773. A helical transmembrane segment spans residues 813–833 (ILVAAVAGTITVVVVIFITAV). Residues 834–1347 (VRCRQAPHLK…DSPIMEEHPL (514 aa)) lie on the Cytoplasmic side of the membrane. 3 disordered regions span residues 1057–1091 (LPEG…GYPQ), 1097–1116 (RATP…ESTF), and 1326–1347 (FTPR…EHPL).

The protein resides in the cell membrane. Its function is as follows. Potential calcium-dependent cell-adhesion protein. This chain is Protocadherin-11 X-linked (PCDH11X), found in Gorilla gorilla gorilla (Western lowland gorilla).